The chain runs to 192 residues: ADP-ribosylation factor-like protein 14 (192 aa).

Gly2 is lipidated: N-myristoyl glycine. GTP-binding positions include 20 to 27 (GLDSAGKS), 64 to 68 (DVGGQ), and 123 to 126 (NKQD).

It belongs to the small GTPase superfamily. Arf family. As to quaternary structure, interacts with ARL14EP. In terms of tissue distribution, expressed in immature dendritic cells.

Its subcellular location is the cytoplasmic vesicle. Functionally, GTPase that recruits MYO1E to MHC class II-containing vesicles via the effector protein ARL14EP and hence controls the movement of these vesicles along the actin cytoskeleton in dendritic cells. This is ADP-ribosylation factor-like protein 14 (ARL14) from Homo sapiens (Human).